The chain runs to 656 residues: MGGFPEATGNLLDAAAQEFHPTVCAPYPLQPLPQQLYCPHPYPAMPVPPPPQIAMLQPVPPMAMAMAPQPGYTLPTTTPVVNGPSSRVVVLGLVPPHAQEADVAQAMAPFGAIRSVDACAVASEGVATVHFFDIRAAELALTCVREQHMRQQSRLGQLYAAAAVAPAWAPAPTPQAWDWPHPNDDGRGLVLGHAVWAHFATGADDGDNRGSLVVLSPLPGVSVADLRQVFQAFGDLKDVRESAQRPSHKFVDFFDTRDAARALAELNGQELFGRRLVVEFTRPSGPGPRRRGYAPHQHRPTAPTPPRLQATWRPSQPTSSQPPASSSSSGSVRAREGVVLLRRSSCKSSAGSDQSSKGGNAGTSHERKTKGGKIVVAAAAASSSTPTASGKQTQKGVGSSGGGSWKGRKSGWEARFLFKEPEAGGGADTQATPASEMDTRTTVMIRNIPNKYSQKLLLNMLDNHCIQSNEWIVASGEEQPFSAYDFVYLPIDFNNKCNVGYGFVNLTSPEARVRLYKAFHKQPWEVYNSRKICQVTYARVQGLEALKEHFKNSKFPCDSDEYLPVAFSPARDGKELTDPVPIVGRSPAASSASSPPKSRAASVDRLGQELMPAPSSSADGASSTTTSTHAPSEHDEEEEEGDIRLAGELRRLGYDD.

Positions 211 to 283 (SLVVLSPLPG…RRLVVEFTRP (73 aa)) constitute an RRM domain. Disordered regions lie at residues 280–408 (FTRP…WKGR) and 576–656 (LTDP…GYDD). Over residues 288 to 299 (PRRRGYAPHQHR) the composition is skewed to basic residues. Positions 314–331 (PSQPTSSQPPASSSSSGS) are enriched in low complexity. Polar residues predominate over residues 346–358 (CKSSAGSDQSSKG). Low complexity-rich tracts occupy residues 377–397 (AAAA…QKGV), 585–601 (RSPA…SRAA), and 612–630 (PAPS…STHA). Residues 642 to 656 (DIRLAGELRRLGYDD) are compositionally biased toward basic and acidic residues.

As to expression, expressed below the shoot tip down the flanks of shoot apex in an alternating pattern. Not expressed in root tips, leaves or immature ears (female inflorescences).

Probable RNA-binding protein. Involved in the regulation of leaf initiation rate and shoot development. Seems to act more predominantly in the early stages of the leaf development, rather than in the later phase. This Zea mays (Maize) protein is Protein terminal ear1 (TE1).